Reading from the N-terminus, the 352-residue chain is Ubiquitin thioesterase otulin (352 aa).

Residues 1–49 (MSRGTMPQPGAWPGASCAETPAREAGAAARDGGKVTAGAQPRAATRCPA) form a disordered region. Positions 18–30 (AETPAREAGAAAR) are enriched in low complexity. The stretch at 49-73 (AEHEEDMYRAADEIEKEKELLIHER) forms a coiled coil. A PIM motif motif is present at residues 52–57 (EEDMYR). Tyrosine 56 is modified (phosphotyrosine). Linear diubiquitin binding regions lie at residues 95 to 96 (EW) and 124 to 126 (RGD). The 229-residue stretch at 118–346 (TSIRRVRGDN…DRHYNIPVRV (229 aa)) folds into the OTU domain. Aspartate 126 is an active-site residue. The active-site Nucleophile is cysteine 129. Linear diubiquitin binding stretches follow at residues 255–259 (FFSVL), 283–289 (TGGLEQV), and 336–338 (DDR). Histidine 339 is an active-site residue. The PDZ-binding signature appears at 349–352 (ETSV).

Belongs to the peptidase C65 family. Otulin subfamily. As to quaternary structure, interacts (via the PUB domain) with RNF31 (via the PIM motif); the interaction is direct. Interacts with DVL2. In terms of processing, ubiquitinated. Post-translationally, acetylated. Phosphorylated. Phosphorylation at Tyr-56 prevents interaction with RNF31; dephosphorylation promotes interaction with RNF31 and the LUBAC complex.

Its subcellular location is the cytoplasm. The catalysed reaction is Thiol-dependent hydrolysis of ester, thioester, amide, peptide and isopeptide bonds formed by the C-terminal Gly of ubiquitin (a 76-residue protein attached to proteins as an intracellular targeting signal).. Deubiquitinase that specifically removes linear ('Met-1'-linked) polyubiquitin chains to substrates and acts as a regulator of angiogenesis and innate immune response. Required during angiogenesis, craniofacial and neuronal development by regulating the canonical Wnt signaling together with the LUBAC complex. Acts as a negative regulator of NF-kappa-B by regulating the activity of the LUBAC complex. OTULIN function is mainly restricted to homeostasis of the LUBAC complex: acts by removing 'Met-1'-linked autoubiquitination of the LUBAC complex, thereby preventing inactivation of the LUBAC complex. Acts as a key negative regulator of inflammation by restricting spontaneous inflammation and maintaining immune homeostasis. In myeloid cell, required to prevent unwarranted secretion of cytokines leading to inflammation and autoimmunity by restricting linear polyubiquitin formation. Plays a role in innate immune response by restricting linear polyubiquitin formation on LUBAC complex in response to NOD2 stimulation, probably to limit NOD2-dependent pro-inflammatory signaling. In Mus musculus (Mouse), this protein is Ubiquitin thioesterase otulin.